A 349-amino-acid polypeptide reads, in one-letter code: Heme A synthase (349 aa).

Transmembrane regions (helical) follow at residues 15–35, 101–121, 132–152, 162–182, and 203–223; these read AVQV…VVGG, LLGR…ALTG, FGLF…VASG, YRLA…VAVA, and VLVG…GLDA. His265 is a binding site for heme. The next 3 helical transmembrane spans lie at 268 to 288, 296 to 316, and 317 to 337; these read IAYL…RLGG, LVFA…VHMV, and PLDL…AAMI. A heme-binding site is contributed by His324.

It belongs to the COX15/CtaA family. Type 2 subfamily. Interacts with CtaB. It depends on heme b as a cofactor.

The protein resides in the cell membrane. The enzyme catalyses Fe(II)-heme o + 2 A + H2O = Fe(II)-heme a + 2 AH2. It participates in porphyrin-containing compound metabolism; heme A biosynthesis; heme A from heme O: step 1/1. Its function is as follows. Catalyzes the conversion of heme O to heme A by two successive hydroxylations of the methyl group at C8. The first hydroxylation forms heme I, the second hydroxylation results in an unstable dihydroxymethyl group, which spontaneously dehydrates, resulting in the formyl group of heme A. The polypeptide is Heme A synthase (Azorhizobium caulinodans (strain ATCC 43989 / DSM 5975 / JCM 20966 / LMG 6465 / NBRC 14845 / NCIMB 13405 / ORS 571)).